The following is a 468-amino-acid chain: ATP synthase subunit beta (468 aa).

155–162 (GGAGVGKT) is a binding site for ATP.

This sequence belongs to the ATPase alpha/beta chains family. F-type ATPases have 2 components, CF(1) - the catalytic core - and CF(0) - the membrane proton channel. CF(1) has five subunits: alpha(3), beta(3), gamma(1), delta(1), epsilon(1). CF(0) has three main subunits: a(1), b(2) and c(9-12). The alpha and beta chains form an alternating ring which encloses part of the gamma chain. CF(1) is attached to CF(0) by a central stalk formed by the gamma and epsilon chains, while a peripheral stalk is formed by the delta and b chains.

The protein localises to the cell membrane. The catalysed reaction is ATP + H2O + 4 H(+)(in) = ADP + phosphate + 5 H(+)(out). In terms of biological role, produces ATP from ADP in the presence of a proton gradient across the membrane. The catalytic sites are hosted primarily by the beta subunits. The protein is ATP synthase subunit beta of Bacillus cereus (strain G9842).